The chain runs to 238 residues: Uridylate kinase (238 aa).

Residue K12–G15 coordinates ATP. Position 54 (G54) interacts with UMP. Positions 55 and 59 each coordinate ATP. Residues D74 and T135 to T142 each bind UMP. T162, Y168, and D171 together coordinate ATP.

It belongs to the UMP kinase family. As to quaternary structure, homohexamer.

It is found in the cytoplasm. The catalysed reaction is UMP + ATP = UDP + ADP. The protein operates within pyrimidine metabolism; CTP biosynthesis via de novo pathway; UDP from UMP (UMPK route): step 1/1. Its activity is regulated as follows. Inhibited by UTP. Its function is as follows. Catalyzes the reversible phosphorylation of UMP to UDP. The chain is Uridylate kinase from Nitrosospira multiformis (strain ATCC 25196 / NCIMB 11849 / C 71).